A 304-amino-acid chain; its full sequence is GTP cyclohydrolase FolE2 (304 aa).

Belongs to the GTP cyclohydrolase IV family.

It carries out the reaction GTP + H2O = 7,8-dihydroneopterin 3'-triphosphate + formate + H(+). The protein operates within cofactor biosynthesis; 7,8-dihydroneopterin triphosphate biosynthesis; 7,8-dihydroneopterin triphosphate from GTP: step 1/1. In terms of biological role, converts GTP to 7,8-dihydroneopterin triphosphate. The chain is GTP cyclohydrolase FolE2 from Chromohalobacter salexigens (strain ATCC BAA-138 / DSM 3043 / CIP 106854 / NCIMB 13768 / 1H11).